We begin with the raw amino-acid sequence, 1073 residues long: Guanylyl cyclase C (1073 aa).

Positions methionine 1–serine 23 are cleaved as a signal peptide. The Extracellular segment spans residues serine 24–glutamine 430. N-linked (GlcNAc...) asparagine glycans are attached at residues asparagine 32, asparagine 75, asparagine 79, asparagine 195, asparagine 284, asparagine 307, asparagine 345, and asparagine 402. Residues isoleucine 431–leucine 454 form a helical membrane-spanning segment. Residues arginine 455–phenylalanine 1073 lie on the Cytoplasmic side of the membrane. A Protein kinase domain is found at leucine 489–phenylalanine 749. In terms of domain architecture, Guanylate cyclase spans threonine 824 to glutamate 954.

The protein belongs to the adenylyl cyclase class-4/guanylyl cyclase family. In terms of assembly, homotrimer. Interacts via its C-terminal region with NHERF4. Interacts with the lectin chaperone VIP36. Glycosylation at Asn-75 and/or Asn-79 is required for interaction with VIP36 while glycosylation at Asn-345 and Asn-402 modulates ligand-mediated GUCY2C activation.

The protein localises to the cell membrane. It localises to the endoplasmic reticulum membrane. The catalysed reaction is GTP = 3',5'-cyclic GMP + diphosphate. Its function is as follows. Guanylyl cyclase that catalyzes synthesis of cyclic GMP (cGMP) from GTP. Receptor for the E.coli heat-stable enterotoxin; E.coli enterotoxin markedly stimulates the accumulation of cGMP in mammalian cells expressing GUCY2C. Also activated by the endogenous peptides guanylin and uroguanylin. The polypeptide is Guanylyl cyclase C (Homo sapiens (Human)).